Reading from the N-terminus, the 484-residue chain is MKFKQDFFTQLPEFYSQVYPQGISNPHWLAWSDDAAALIGLHQPTDELLQGLSGNAAVEGASYYAQVYSGHQFGGYTPRLGDGRSIILGEAIGPNGAWDVALKGGGPTPYSRHGDGRAVMRSAVREFLVSEALHHLGVPTTRALAVIGSDMPVWRESQETAAITVRLARSHIRFGHFEFFSHSERGQADKLTQLLNFTLKQHYPHLSCDPAGYKAWFLQVVQDSAKMIAHWQAIGFAHGVMNTDNMSILGDSFDFGPFAFLDTFQEDFICNHSDPDGRYAFGQQPGIGLWNLQRLAQALTPVIASDDLIAALNQYQHALVQHYLALMRAKLGLVQQADSSAEQDQQDLELIGRFTVLMEKNQLDYSHTWRRFGQLDPSSLHSSLRDDFIDLNEFDAWYQVYQARLGKVTDVEAWQQQCNRVNPKYILRNYLAQEAIIAVDEGNLAQLQRLHQVLRQPFTEQIEHEELAKRPPDWGQGLIMSCSS.

Residues Gly81, Gly83, Arg84, Lys103, Asp115, Gly116, Arg166, and Arg173 each coordinate ATP. The active-site Proton acceptor is the Asp244. The Mg(2+) site is built by Asn245 and Asp254. Asp254 contributes to the ATP binding site.

The protein belongs to the SELO family. Requires Mg(2+) as cofactor. It depends on Mn(2+) as a cofactor.

It catalyses the reaction L-seryl-[protein] + ATP = 3-O-(5'-adenylyl)-L-seryl-[protein] + diphosphate. It carries out the reaction L-threonyl-[protein] + ATP = 3-O-(5'-adenylyl)-L-threonyl-[protein] + diphosphate. The catalysed reaction is L-tyrosyl-[protein] + ATP = O-(5'-adenylyl)-L-tyrosyl-[protein] + diphosphate. The enzyme catalyses L-histidyl-[protein] + UTP = N(tele)-(5'-uridylyl)-L-histidyl-[protein] + diphosphate. It catalyses the reaction L-seryl-[protein] + UTP = O-(5'-uridylyl)-L-seryl-[protein] + diphosphate. It carries out the reaction L-tyrosyl-[protein] + UTP = O-(5'-uridylyl)-L-tyrosyl-[protein] + diphosphate. Its function is as follows. Nucleotidyltransferase involved in the post-translational modification of proteins. It can catalyze the addition of adenosine monophosphate (AMP) or uridine monophosphate (UMP) to a protein, resulting in modifications known as AMPylation and UMPylation. The protein is Protein nucleotidyltransferase YdiU of Shewanella oneidensis (strain ATCC 700550 / JCM 31522 / CIP 106686 / LMG 19005 / NCIMB 14063 / MR-1).